A 406-amino-acid polypeptide reads, in one-letter code: Probable tRNA sulfurtransferase (406 aa).

The THUMP domain maps to 62–167; that stretch reads AEVSNRLTKV…QDATYLSFED (106 aa). ATP contacts are provided by residues 185–186, 210–211, Arg-267, Gly-289, and Gln-298; these read ML and HF.

Belongs to the ThiI family.

It localises to the cytoplasm. It catalyses the reaction [ThiI sulfur-carrier protein]-S-sulfanyl-L-cysteine + a uridine in tRNA + 2 reduced [2Fe-2S]-[ferredoxin] + ATP + H(+) = [ThiI sulfur-carrier protein]-L-cysteine + a 4-thiouridine in tRNA + 2 oxidized [2Fe-2S]-[ferredoxin] + AMP + diphosphate. It carries out the reaction [ThiS sulfur-carrier protein]-C-terminal Gly-Gly-AMP + S-sulfanyl-L-cysteinyl-[cysteine desulfurase] + AH2 = [ThiS sulfur-carrier protein]-C-terminal-Gly-aminoethanethioate + L-cysteinyl-[cysteine desulfurase] + A + AMP + 2 H(+). It functions in the pathway cofactor biosynthesis; thiamine diphosphate biosynthesis. Catalyzes the ATP-dependent transfer of a sulfur to tRNA to produce 4-thiouridine in position 8 of tRNAs, which functions as a near-UV photosensor. Also catalyzes the transfer of sulfur to the sulfur carrier protein ThiS, forming ThiS-thiocarboxylate. This is a step in the synthesis of thiazole, in the thiamine biosynthesis pathway. The sulfur is donated as persulfide by IscS. This chain is Probable tRNA sulfurtransferase, found in Lactococcus lactis subsp. cremoris (strain MG1363).